The sequence spans 202 residues: Nucleoside triphosphate pyrophosphatase (202 aa).

The active-site Proton acceptor is the D79.

It belongs to the Maf family. The cofactor is a divalent metal cation.

It localises to the cytoplasm. It catalyses the reaction a ribonucleoside 5'-triphosphate + H2O = a ribonucleoside 5'-phosphate + diphosphate + H(+). It carries out the reaction a 2'-deoxyribonucleoside 5'-triphosphate + H2O = a 2'-deoxyribonucleoside 5'-phosphate + diphosphate + H(+). Functionally, nucleoside triphosphate pyrophosphatase. May have a dual role in cell division arrest and in preventing the incorporation of modified nucleotides into cellular nucleic acids. The polypeptide is Nucleoside triphosphate pyrophosphatase (Rhodopseudomonas palustris (strain HaA2)).